The following is a 126-amino-acid chain: Holo-[acyl-carrier-protein] synthase (126 aa).

Mg(2+) is bound by residues aspartate 9 and glutamate 58.

Belongs to the P-Pant transferase superfamily. AcpS family. Mg(2+) serves as cofactor.

The protein localises to the cytoplasm. It carries out the reaction apo-[ACP] + CoA = holo-[ACP] + adenosine 3',5'-bisphosphate + H(+). Transfers the 4'-phosphopantetheine moiety from coenzyme A to a Ser of acyl-carrier-protein. The chain is Holo-[acyl-carrier-protein] synthase from Yersinia pestis bv. Antiqua (strain Angola).